The sequence spans 332 residues: Leucine carboxyl methyltransferase 1 homolog (332 aa).

S-adenosyl-L-methionine-binding positions include lysine 22, arginine 57, glycine 83, aspartate 107, 153–154, and glutamate 180; that span reads DL.

The protein belongs to the methyltransferase superfamily. LCMT family.

It localises to the cytoplasm. Its subcellular location is the membrane. It catalyses the reaction [phosphatase 2A protein]-C-terminal L-leucine + S-adenosyl-L-methionine = [phosphatase 2A protein]-C-terminal L-leucine methyl ester + S-adenosyl-L-homocysteine. Methylates the carboxyl group of the C-terminal leucine residue of protein phosphatase 2A (PP2A) catalytic subunits to form alpha-leucine ester residues. Involved in brassinosteroid (BR) signaling. Plays a negative role in BR signaling pathway. Functions as a positive regulator of BRI1 receptor-kinase degradation. Methylates PP2A, thus facilitating its association with activated BRI1. This leads to receptor dephosphorylation and degradation, and thus to the termination of BR signaling. May act upstream of ASK7/BIN2. Involved in methylation of PP2A during environmental stress responses. The chain is Leucine carboxyl methyltransferase 1 homolog from Arabidopsis thaliana (Mouse-ear cress).